Consider the following 51-residue polypeptide: uncharacterized protein (51 aa).

This is an uncharacterized protein from Escherichia coli (strain K12).